Reading from the N-terminus, the 410-residue chain is Inositol hexakisphosphate kinase 3 (410 aa).

A substrate-binding site is contributed by 211–219 (PCVLDLKMG). The interval 333–358 (QEPPERAPGSPHPHEAPQAAHGSSPG) is disordered.

This sequence belongs to the inositol phosphokinase (IPK) family. As to expression, detected in brain.

The protein localises to the cytoplasm. The enzyme catalyses 1D-myo-inositol hexakisphosphate + ATP = 5-diphospho-1D-myo-inositol 1,2,3,4,6-pentakisphosphate + ADP. It carries out the reaction 1-diphospho-1D-myo-inositol 2,3,4,5,6-pentakisphosphate + ATP + H(+) = 1,5-bis(diphospho)-1D-myo-inositol 2,3,4,6-tetrakisphosphate + ADP. In terms of biological role, converts inositol hexakisphosphate (InsP6) to diphosphoinositol pentakisphosphate (InsP7/PP-InsP5). Converts 1,3,4,5,6-pentakisphosphate (InsP5) to PP-InsP4. The chain is Inositol hexakisphosphate kinase 3 (IP6K3) from Homo sapiens (Human).